Reading from the N-terminus, the 485-residue chain is ATP synthase subunit beta (485 aa).

Residue 170–177 (GGAGVGKT) participates in ATP binding.

The protein belongs to the ATPase alpha/beta chains family. As to quaternary structure, F-type ATPases have 2 components, CF(1) - the catalytic core - and CF(0) - the membrane proton channel. CF(1) has five subunits: alpha(3), beta(3), gamma(1), delta(1), epsilon(1). CF(0) has three main subunits: a(1), b(2) and c(9-12). The alpha and beta chains form an alternating ring which encloses part of the gamma chain. CF(1) is attached to CF(0) by a central stalk formed by the gamma and epsilon chains, while a peripheral stalk is formed by the delta and b chains.

The protein localises to the cell membrane. It carries out the reaction ATP + H2O + 4 H(+)(in) = ADP + phosphate + 5 H(+)(out). Its function is as follows. Produces ATP from ADP in the presence of a proton gradient across the membrane. The catalytic sites are hosted primarily by the beta subunits. The chain is ATP synthase subunit beta from Salinispora arenicola (strain CNS-205).